We begin with the raw amino-acid sequence, 390 residues long: Neuromedin-B receptor (390 aa).

A compositionally biased stretch (polar residues) spans 1–19 (MPSKSLSNLSVTTGANESG). A disordered region spans residues 1–22 (MPSKSLSNLSVTTGANESGSVP). Residues 1 to 41 (MPSKSLSNLSVTTGANESGSVPEGWERDFLPASDGTTTELV) are Extracellular-facing. 2 N-linked (GlcNAc...) asparagine glycosylation sites follow: Asn-8 and Asn-16. A helical membrane pass occupies residues 42 to 65 (IRCVIPSLYLLIITVGLLGNIMLV). Topologically, residues 66–79 (KIFITNSAMRSVPN) are cytoplasmic. The chain crosses the membrane as a helical span at residues 80–99 (IFISNLAAGDLLLLLTCVPV). Topologically, residues 100 to 117 (DASRYFFDEWMFGKVGCK) are extracellular. Cysteines 116 and 198 form a disulfide. A helical transmembrane segment spans residues 118–139 (LIPVIQLTSVGVSVFTLTALSA). Topologically, residues 140–156 (DRYRAIVNPMDMQTSGA) are cytoplasmic. The helical transmembrane segment at 157–177 (LLRTCVKAMGIWVVSVLLAVP) threads the bilayer. The Extracellular segment spans residues 178-211 (EAVFSEVARISSLDNSSFTACIPYPQTDELHPKI). A glycan (N-linked (GlcNAc...) asparagine) is linked at Asn-192. The helical transmembrane segment at 212–235 (HSVLIFLVYFLIPLAIISIYYYHI) threads the bilayer. Topologically, residues 236–266 (AKTLIKSAHNLPGEYNEHTKKQMETRKRLAK) are cytoplasmic. The helical transmembrane segment at 267-287 (IVLVFVGCFIFCWFPNHILYM) threads the bilayer. The Extracellular portion of the chain corresponds to 288–299 (YRSFNYNEIDPS). A helical transmembrane segment spans residues 300–327 (LGHMIVTLVARVLSFGNSCVNPFALYLL). The Cytoplasmic portion of the chain corresponds to 328-390 (SESFRRHFNS…GHSMKQEMAL (63 aa)). Residue Cys-341 is the site of S-palmitoyl cysteine attachment. Ser-352 is modified (phosphoserine).

Belongs to the G-protein coupled receptor 1 family. As to expression, expressed in epididymis (at protein level).

It localises to the cell membrane. Functionally, receptor for neuromedin-B. Contributes to the maintenance of basal sigh rate through signaling in the pre-Botzinger complex, a cluster of several thousand neurons in the ventrolateral medulla responsible for inspiration during respiratory activity. Contributes to the induction of sneezing following exposure to chemical irritants or allergens which causes release of NMB by nasal sensory neurons and activation of NMBR-expressing neurons in the sneeze-evoking region of the brainstem. These in turn activate neurons of the caudal ventral respiratory group, giving rise to the sneezing response. Contributes to induction of acute itch, possibly through its activation on dorsal root ganglion neurons by the NMB peptide. Plays a role in the innate immune response to influenza A virus infection by enhancing interferon alpha expression and reducing expression of IL6. Plays a role in CSF1-induced proliferation of osteoclast precursors by contributing to the positive regulation of the expression of the CSF1 receptor CSF1R. This chain is Neuromedin-B receptor (NMBR), found in Homo sapiens (Human).